The primary structure comprises 168 residues: Peptide deformylase (168 aa).

2 residues coordinate Fe cation: cysteine 92 and histidine 134. Glutamate 135 is an active-site residue. Histidine 138 provides a ligand contact to Fe cation.

It belongs to the polypeptide deformylase family. Fe(2+) is required as a cofactor.

It carries out the reaction N-terminal N-formyl-L-methionyl-[peptide] + H2O = N-terminal L-methionyl-[peptide] + formate. Removes the formyl group from the N-terminal Met of newly synthesized proteins. Requires at least a dipeptide for an efficient rate of reaction. N-terminal L-methionine is a prerequisite for activity but the enzyme has broad specificity at other positions. The chain is Peptide deformylase from Teredinibacter turnerae (strain ATCC 39867 / T7901).